We begin with the raw amino-acid sequence, 390 residues long: Lipoyl synthase, mitochondrial (390 aa).

A mitochondrion-targeting transit peptide spans 1 to 19; it reads MPTLLRILRPPRSPFTRCL. The segment at 23-48 is disordered; sequence ATPSSSGSSSRSKFTESLETGPGLDD. Positions 98, 103, 109, 136, 140, 143, and 350 each coordinate [4Fe-4S] cluster. The Radical SAM core domain occupies 119 to 339; that stretch reads AEGRSAATAT…KEVAENLGFL (221 aa).

This sequence belongs to the radical SAM superfamily. Lipoyl synthase family. It depends on [4Fe-4S] cluster as a cofactor.

It is found in the mitochondrion. It catalyses the reaction [[Fe-S] cluster scaffold protein carrying a second [4Fe-4S](2+) cluster] + N(6)-octanoyl-L-lysyl-[protein] + 2 oxidized [2Fe-2S]-[ferredoxin] + 2 S-adenosyl-L-methionine + 4 H(+) = [[Fe-S] cluster scaffold protein] + N(6)-[(R)-dihydrolipoyl]-L-lysyl-[protein] + 4 Fe(3+) + 2 hydrogen sulfide + 2 5'-deoxyadenosine + 2 L-methionine + 2 reduced [2Fe-2S]-[ferredoxin]. The protein operates within protein modification; protein lipoylation via endogenous pathway; protein N(6)-(lipoyl)lysine from octanoyl-[acyl-carrier-protein]: step 2/2. Catalyzes the radical-mediated insertion of two sulfur atoms into the C-6 and C-8 positions of the octanoyl moiety bound to the lipoyl domains of lipoate-dependent enzymes, thereby converting the octanoylated domains into lipoylated derivatives. The chain is Lipoyl synthase, mitochondrial from Laccaria bicolor (strain S238N-H82 / ATCC MYA-4686) (Bicoloured deceiver).